The following is a 413-amino-acid chain: Glucose-1-phosphate adenylyltransferase (413 aa).

Alpha-D-glucose 1-phosphate-binding positions include Tyr-102, Gly-167, 182-183 (EK), and Ser-200.

It belongs to the bacterial/plant glucose-1-phosphate adenylyltransferase family. In terms of assembly, homotetramer.

It catalyses the reaction alpha-D-glucose 1-phosphate + ATP + H(+) = ADP-alpha-D-glucose + diphosphate. It functions in the pathway glycan biosynthesis; glycogen biosynthesis. Its function is as follows. Involved in the biosynthesis of ADP-glucose, a building block required for the elongation reactions to produce glycogen. Catalyzes the reaction between ATP and alpha-D-glucose 1-phosphate (G1P) to produce pyrophosphate and ADP-Glc. In Deinococcus geothermalis (strain DSM 11300 / CIP 105573 / AG-3a), this protein is Glucose-1-phosphate adenylyltransferase.